The sequence spans 632 residues: tRNA uridine 5-carboxymethylaminomethyl modification enzyme MnmG (632 aa).

FAD contacts are provided by residues G16–G21, V128, and S183. The interval P206–K225 is disordered. The span at S216–K225 shows a compositional bias: basic and acidic residues. Residue G277–F291 participates in NAD(+) binding. Q374 is a binding site for FAD.

This sequence belongs to the MnmG family. As to quaternary structure, homodimer. Heterotetramer of two MnmE and two MnmG subunits. FAD is required as a cofactor.

It is found in the cytoplasm. Its function is as follows. NAD-binding protein involved in the addition of a carboxymethylaminomethyl (cmnm) group at the wobble position (U34) of certain tRNAs, forming tRNA-cmnm(5)s(2)U34. The chain is tRNA uridine 5-carboxymethylaminomethyl modification enzyme MnmG from Lactobacillus acidophilus (strain ATCC 700396 / NCK56 / N2 / NCFM).